Here is a 240-residue protein sequence, read N- to C-terminus: tRNA (guanine-N(7)-)-methyltransferase (240 aa).

4 residues coordinate S-adenosyl-L-methionine: Glu-71, Glu-96, Asp-123, and Asp-146. The active site involves Asp-146. Substrate is bound by residues Lys-150, Asp-182, and 219-222; that span reads TKFE.

The protein belongs to the class I-like SAM-binding methyltransferase superfamily. TrmB family.

It carries out the reaction guanosine(46) in tRNA + S-adenosyl-L-methionine = N(7)-methylguanosine(46) in tRNA + S-adenosyl-L-homocysteine. The protein operates within tRNA modification; N(7)-methylguanine-tRNA biosynthesis. Its function is as follows. Catalyzes the formation of N(7)-methylguanine at position 46 (m7G46) in tRNA. This Hydrogenovibrio crunogenus (strain DSM 25203 / XCL-2) (Thiomicrospira crunogena) protein is tRNA (guanine-N(7)-)-methyltransferase.